Here is a 137-residue protein sequence, read N- to C-terminus: Integration host factor subunit beta (137 aa).

Over residues 75–92 the composition is skewed to basic and acidic residues; that stretch reads KRVPHFKAGKELRERVDR. Residues 75–137 are disordered; sequence KRVPHFKAGK…EGGGLNLARS (63 aa). The segment covering 128-137 has biased composition (gly residues); the sequence is EGGGLNLARS.

This sequence belongs to the bacterial histone-like protein family. Heterodimer of an alpha and a beta chain.

Functionally, this protein is one of the two subunits of integration host factor, a specific DNA-binding protein that functions in genetic recombination as well as in transcriptional and translational control. This Cupriavidus pinatubonensis (strain JMP 134 / LMG 1197) (Cupriavidus necator (strain JMP 134)) protein is Integration host factor subunit beta.